Consider the following 238-residue polypeptide: Probable transcriptional regulatory protein CPn_0573/CP_0176/CPj0573/CpB0595 (238 aa).

The segment at 1–20 (MAGHSKWANTKHRKERADHK) is disordered. A compositionally biased stretch (basic residues) spans 9–20 (NTKHRKERADHK).

It belongs to the TACO1 family.

It is found in the cytoplasm. In Chlamydia pneumoniae (Chlamydophila pneumoniae), this protein is Probable transcriptional regulatory protein CPn_0573/CP_0176/CPj0573/CpB0595.